Here is a 482-residue protein sequence, read N- to C-terminus: tRNA sulfurtransferase (482 aa).

The region spanning 61-165 (VQICDALTRI…QDVLILVKAR (105 aa)) is the THUMP domain. ATP contacts are provided by residues 183-184 (LI), Lys-265, Gly-287, and Gln-296. A disulfide bridge links Cys-344 with Cys-456. Residues 404–482 (FAPTDVLLDI…GFDNVKVYRP (79 aa)) form the Rhodanese domain. Cys-456 acts as the Cysteine persulfide intermediate in catalysis.

Belongs to the ThiI family.

It is found in the cytoplasm. The enzyme catalyses [ThiI sulfur-carrier protein]-S-sulfanyl-L-cysteine + a uridine in tRNA + 2 reduced [2Fe-2S]-[ferredoxin] + ATP + H(+) = [ThiI sulfur-carrier protein]-L-cysteine + a 4-thiouridine in tRNA + 2 oxidized [2Fe-2S]-[ferredoxin] + AMP + diphosphate. It carries out the reaction [ThiS sulfur-carrier protein]-C-terminal Gly-Gly-AMP + S-sulfanyl-L-cysteinyl-[cysteine desulfurase] + AH2 = [ThiS sulfur-carrier protein]-C-terminal-Gly-aminoethanethioate + L-cysteinyl-[cysteine desulfurase] + A + AMP + 2 H(+). It functions in the pathway cofactor biosynthesis; thiamine diphosphate biosynthesis. Functionally, catalyzes the ATP-dependent transfer of a sulfur to tRNA to produce 4-thiouridine in position 8 of tRNAs, which functions as a near-UV photosensor. Also catalyzes the transfer of sulfur to the sulfur carrier protein ThiS, forming ThiS-thiocarboxylate. This is a step in the synthesis of thiazole, in the thiamine biosynthesis pathway. The sulfur is donated as persulfide by IscS. The polypeptide is tRNA sulfurtransferase (Photorhabdus laumondii subsp. laumondii (strain DSM 15139 / CIP 105565 / TT01) (Photorhabdus luminescens subsp. laumondii)).